A 203-amino-acid chain; its full sequence is Nascent polypeptide-associated complex subunit alpha (203 aa).

The segment covering 1-19 has biased composition (basic and acidic residues); the sequence is MADPRIEELPDEEVPKTNV. Residues 1–45 are disordered; it reads MADPRIEELPDEEVPKTNVEDAADSSESEAGEEPTIPGGAAVTIH. Over residues 21–32 the composition is skewed to acidic residues; it reads DAADSSESEAGE. Positions 46 to 111 constitute an NAC-A/B domain; the sequence is SRNEKKARKA…AKIEDLNSQA (66 aa). Residues 118 to 167 form a disordered region; the sequence is QLAAAEAAGEHAGHDHDHDKGKGKAPETEAKKEEEEDDGEEVDETGLEPK. A compositionally biased stretch (basic and acidic residues) spans 125-150; that stretch reads AGEHAGHDHDHDKGKGKAPETEAKKE. The span at 151–163 shows a compositional bias: acidic residues; that stretch reads EEEDDGEEVDETG. The UBA domain occupies 164–203; sequence LEPKDIDLVMAQANVSRKKAVKALRENDNDIVNSIMALSI.

This sequence belongs to the NAC-alpha family. Part of the nascent polypeptide-associated complex (NAC), consisting of egd2 and egd1. NAC associates with ribosomes via egd1.

Its subcellular location is the cytoplasm. The protein resides in the nucleus. Its function is as follows. Component of the nascent polypeptide-associated complex (NAC), a dynamic component of the ribosomal exit tunnel, protecting the emerging polypeptides from interaction with other cytoplasmic proteins to ensure appropriate nascent protein targeting. The NAC complex also promotes mitochondrial protein import by enhancing productive ribosome interactions with the outer mitochondrial membrane and blocks the inappropriate interaction of ribosomes translating non-secretory nascent polypeptides with translocation sites in the membrane of the endoplasmic reticulum. Egd2 may also be involved in transcription regulation. This is Nascent polypeptide-associated complex subunit alpha (egd2) from Emericella nidulans (strain FGSC A4 / ATCC 38163 / CBS 112.46 / NRRL 194 / M139) (Aspergillus nidulans).